The primary structure comprises 1469 residues: WASH complex subunit 2 (1469 aa).

Ser136 carries the post-translational modification Phosphoserine. Disordered regions lie at residues 178–349 (YDSK…RMPV) and 367–546 (KVQS…RVAG). The segment covering 197 to 206 (SDEKEPETKK) has biased composition (basic and acidic residues). Residue Ser227 is modified to Phosphoserine. Low complexity-rich tracts occupy residues 276–293 (SPPS…TSSP) and 306–316 (STASLSSSSSS). Positions 351-372 (LFNEDEFKSFMSEIVDKVQSKT) match the LFa 1 motif. The span at 370 to 385 (SKTPSSSVSPATTIST) shows a compositional bias: polar residues. Residues 387–399 (EPPKTKKPVEEYP) show a composition bias toward basic and acidic residues. Phosphoserine is present on residues Ser422 and Ser426. The segment covering 519–528 (FDDDDLDIDD) has biased composition (acidic residues). Residues 550–563 (LFEDDDQDDVTDLF) carry the LFa 5 motif. A disordered region spans residues 571-591 (IPKETSSGVSPNKNVETPVAS). Residues 574–585 (ETSSGVSPNKNV) are compositionally biased toward polar residues. Ser580 carries the phosphoserine modification. Thr587 is subject to Phosphothreonine. An LFa 6 motif is present at residues 595-605 (LFDDIEDEDLF). Disordered stretches follow at residues 607 to 760 (TPKA…TDLF), 933 to 1254 (ALPN…KLFS), and 1316 to 1469 (VTTA…LDFK). 2 stretches are compositionally biased toward basic and acidic residues: residues 626–649 (GEDK…EKQH) and 671–687 (TEQK…KDDT). Position 693 is a phosphothreonine (Thr693). The LFa 8 motif lies at 698 to 709 (LFSEDLTDDELF). Polar residues-rich tracts occupy residues 709–728 (FSST…TNEF), 735–745 (YTSQTEENVSP), and 938–956 (PSAT…SVSS). Composition is skewed to basic and acidic residues over residues 971 to 990 (DNDH…KDEL), 1031 to 1042 (ETDRSEVKETPE), and 1077 to 1089 (RKQE…RDEP). The segment covering 1091–1109 (ATVQTEAEAPSSGQNTVSS) has biased composition (polar residues). Positions 1118-1136 (NKSRARGPAKRRPSTRRGR) are enriched in basic residues. Residues 1159 to 1170 (DSPEVEHSERSS) show a composition bias toward basic and acidic residues. Residues Ser1241, Ser1245, Ser1254, Ser1344, Ser1380, Ser1381, and Ser1408 each carry the phosphoserine modification. Composition is skewed to low complexity over residues 1417–1426 (FGGSSTSKAA) and 1434–1452 (AART…PTAT).

The protein belongs to the FAM21 family. As to quaternary structure, component of the WASH complex.

Functionally, acts at least in part as component of the WASH complex which may regulate wash nucleation-promoting factor (NPF) activity and is required for its membrane targeting during endosomal sorting. The sequence is that of WASH complex subunit 2 from Drosophila melanogaster (Fruit fly).